Reading from the N-terminus, the 197-residue chain is 3-isopropylmalate dehydratase small subunit (197 aa).

This sequence belongs to the LeuD family. LeuD type 1 subfamily. As to quaternary structure, heterodimer of LeuC and LeuD.

The enzyme catalyses (2R,3S)-3-isopropylmalate = (2S)-2-isopropylmalate. Its pathway is amino-acid biosynthesis; L-leucine biosynthesis; L-leucine from 3-methyl-2-oxobutanoate: step 2/4. Catalyzes the isomerization between 2-isopropylmalate and 3-isopropylmalate, via the formation of 2-isopropylmaleate. The sequence is that of 3-isopropylmalate dehydratase small subunit from Azobacteroides pseudotrichonymphae genomovar. CFP2.